The primary structure comprises 189 residues: Haloacid dehalogenase-like hydrolase domain-containing protein 3 (189 aa).

Belongs to the HAD-like hydrolase superfamily.

This Xenopus tropicalis (Western clawed frog) protein is Haloacid dehalogenase-like hydrolase domain-containing protein 3 (hdhd3).